Here is a 469-residue protein sequence, read N- to C-terminus: Uridine kinase-like protein 4 (469 aa).

Positions 46–249 (QRQPFVIGVA…IVQHICTKLG (204 aa)) are uridine kinase. Residues 259–469 (NLYVIHSTFQ…GDRYFGTDDD (211 aa)) form a uracil phosphoribosyltransferase region. Residues Lys283, Arg292, and 326-329 (CKRL) contribute to the GTP site. 2 residues coordinate 5-phospho-alpha-D-ribose 1-diphosphate: Arg336 and Arg361. Position 381 (Arg381) interacts with GTP. 5-phospho-alpha-D-ribose 1-diphosphate-binding positions include Asp387, 392 to 395 (TGNS), and Glu458. 457 to 459 (GEF) contributes to the uracil binding site.

It in the N-terminal section; belongs to the uridine kinase family. In the C-terminal section; belongs to the UPRTase family. Requires Mg(2+) as cofactor.

The enzyme catalyses UMP + diphosphate = 5-phospho-alpha-D-ribose 1-diphosphate + uracil. It carries out the reaction cytidine + ATP = CMP + ADP + H(+). It catalyses the reaction uridine + ATP = UMP + ADP + H(+). The protein operates within pyrimidine metabolism; UMP biosynthesis via salvage pathway; UMP from uracil: step 1/1. It participates in pyrimidine metabolism; CTP biosynthesis via salvage pathway; CTP from cytidine: step 1/3. It functions in the pathway pyrimidine metabolism; UMP biosynthesis via salvage pathway; UMP from uridine: step 1/1. Its activity is regulated as follows. Allosterically activated by GTP. Functionally, involved in the pyrimidine salvage pathway. The uracil phosphoribosyltransferase (UPRT) activity, that catalyzes the conversion of uracil and 5-phospho-alpha-D-ribose 1-diphosphate (PRPP) to UMP and diphosphate, is unsure. This chain is Uridine kinase-like protein 4 (UKL4), found in Arabidopsis thaliana (Mouse-ear cress).